The primary structure comprises 508 residues: Photosystem II CP47 reaction center protein (508 aa).

The next 6 membrane-spanning stretches (helical) occupy residues Ala-21 to Ser-36, Ile-101 to Trp-115, Gly-140 to Phe-156, Val-203 to Ser-218, Val-237 to Val-252, and Thr-457 to Arg-472.

The protein belongs to the PsbB/PsbC family. PsbB subfamily. In terms of assembly, PSII is composed of 1 copy each of membrane proteins PsbA, PsbB, PsbC, PsbD, PsbE, PsbF, PsbH, PsbI, PsbJ, PsbK, PsbL, PsbM, PsbT, PsbX, PsbY, PsbZ, Psb30/Ycf12, at least 3 peripheral proteins of the oxygen-evolving complex and a large number of cofactors. It forms dimeric complexes. Requires Binds multiple chlorophylls. PSII binds additional chlorophylls, carotenoids and specific lipids. as cofactor.

The protein localises to the plastid. The protein resides in the chloroplast thylakoid membrane. Its function is as follows. One of the components of the core complex of photosystem II (PSII). It binds chlorophyll and helps catalyze the primary light-induced photochemical processes of PSII. PSII is a light-driven water:plastoquinone oxidoreductase, using light energy to abstract electrons from H(2)O, generating O(2) and a proton gradient subsequently used for ATP formation. This is Photosystem II CP47 reaction center protein from Welwitschia mirabilis (Tree tumbo).